The following is a 338-amino-acid chain: MSSDNESTPSQATVEMMATSPAKIKEYPEPLALHEVVVKDSSVFWDTLRRFHSIMSTKFMIPVIGGKELDLHVLYVEVTRRGGYEKVVVEKKWREVGGVFRFSATTTSASFVLRKHYLNLLFHYEQVHLFTARGPLLHPIATFHANPSTSKEMALVEYTPPSIRYHNTHPPSQGSSSFTAIGTIEGKFDCGYLVKVKLGSEILNGVLYHSAQPGPSSSPTAVLNNAVVPYVETGRRRRRLGKRRRSRRREDPNYPKPNRSGYNFFFAEKHCKLKSLYPNKEREFTKLIGESWSNLSTEERMVYQDIGLKDKERYQRELNEYRETLRLRDGDMTNGKAF.

The ARID domain maps to 38-129; sequence VKDSSVFWDT…LLFHYEQVHL (92 aa). Residues 233 to 259 are disordered; the sequence is TGRRRRRLGKRRRSRRREDPNYPKPNR. Residues 235-247 show a composition bias toward basic residues; sequence RRRRRLGKRRRSR. Residues 255-322 constitute a DNA-binding region (HMG box); the sequence is PKPNRSGYNF…RYQRELNEYR (68 aa).

In terms of tissue distribution, predominantly expressed in leaves, flowers and seedlings.

The protein localises to the nucleus. In terms of biological role, binds preferentially DNA with A/T-rich content. Required for karyogamy during female gametophyte development, when the two polar nuclei fuse to form the diploid central cell nucleus. The chain is High mobility group B protein 9 (HMGB9) from Arabidopsis thaliana (Mouse-ear cress).